Consider the following 286-residue polypeptide: Lipid phosphate phosphatase epsilon 2, chloroplastic (286 aa).

The N-terminal 60 residues, 1 to 60 (MAASSSSLLLLHKPTYNFHFAASSVPTYINSARFRISSSIFPLDRRRRRRIWSVSGFKSM), are a transit peptide targeting the chloroplast. 5 helical membrane-spanning segments follow: residues 133-149 (LWAV…SVAL), 173-193 (AQSI…WLGT), 194-214 (NVLS…FTWL), 226-246 (VVVG…TWNS), and 260-280 (IALF…VLLN).

This sequence belongs to the PA-phosphatase related phosphoesterase family. In terms of tissue distribution, expressed in root tips, root branch points, cotyledons and leaves.

Its subcellular location is the plastid. The protein resides in the chloroplast inner membrane. With respect to regulation, inhibited by Mg(2+). Its function is as follows. Exhibits phosphatidate phosphatase (PAP) activity in vitro. May play a secondary role as PAP in plastids. In Arabidopsis thaliana (Mouse-ear cress), this protein is Lipid phosphate phosphatase epsilon 2, chloroplastic (LPPE2).